Consider the following 489-residue polypeptide: Beta-galactosidase (489 aa).

Lys-116 is modified (N6-methyllysine; partial). Lys-135 bears the N6-methyllysine mark. Residue Glu-206 is the Proton donor of the active site. N6-methyllysine; partial occurs at positions 273 and 311. Lys-332 is subject to N6-methyllysine. Glu-387 acts as the Nucleophile in catalysis.

In terms of assembly, homotetramer.

It carries out the reaction Hydrolysis of terminal non-reducing beta-D-galactose residues in beta-D-galactosides.. The chain is Beta-galactosidase (lacS) from Saccharolobus solfataricus (strain ATCC 35092 / DSM 1617 / JCM 11322 / P2) (Sulfolobus solfataricus).